The chain runs to 426 residues: D-tagatose-1,6-bisphosphate aldolase subunit KbaZ (426 aa).

It belongs to the GatZ/KbaZ family. KbaZ subfamily. Forms a complex with KbaY.

The protein operates within carbohydrate metabolism; D-tagatose 6-phosphate degradation; D-glyceraldehyde 3-phosphate and glycerone phosphate from D-tagatose 6-phosphate: step 2/2. Its function is as follows. Component of the tagatose-1,6-bisphosphate aldolase KbaYZ that is required for full activity and stability of the Y subunit. Could have a chaperone-like function for the proper and stable folding of KbaY. When expressed alone, KbaZ does not show any aldolase activity. The sequence is that of D-tagatose-1,6-bisphosphate aldolase subunit KbaZ from Escherichia coli O1:K1 / APEC.